A 164-amino-acid chain; its full sequence is Putative pre-16S rRNA nuclease (164 aa).

This sequence belongs to the YqgF nuclease family.

It localises to the cytoplasm. Could be a nuclease involved in processing of the 5'-end of pre-16S rRNA. In Rhizobium rhizogenes (strain K84 / ATCC BAA-868) (Agrobacterium radiobacter), this protein is Putative pre-16S rRNA nuclease.